The following is a 921-amino-acid chain: Isoleucine--tRNA ligase (921 aa).

The 'HIGH' region signature appears at 57-67 (PYANGDIHMGH). Glutamate 552 serves as a coordination point for L-isoleucyl-5'-AMP. Positions 593 to 597 (KMSKS) match the 'KMSKS' region motif. Position 596 (lysine 596) interacts with ATP. Residues cysteine 888, cysteine 891, cysteine 908, and cysteine 911 each coordinate Zn(2+).

This sequence belongs to the class-I aminoacyl-tRNA synthetase family. IleS type 1 subfamily. In terms of assembly, monomer. Requires Zn(2+) as cofactor.

The protein localises to the cytoplasm. It carries out the reaction tRNA(Ile) + L-isoleucine + ATP = L-isoleucyl-tRNA(Ile) + AMP + diphosphate. Catalyzes the attachment of isoleucine to tRNA(Ile). As IleRS can inadvertently accommodate and process structurally similar amino acids such as valine, to avoid such errors it has two additional distinct tRNA(Ile)-dependent editing activities. One activity is designated as 'pretransfer' editing and involves the hydrolysis of activated Val-AMP. The other activity is designated 'posttransfer' editing and involves deacylation of mischarged Val-tRNA(Ile). In Bacillus cereus (strain G9842), this protein is Isoleucine--tRNA ligase.